Here is a 1019-residue protein sequence, read N- to C-terminus: Macrophage colony-stimulating factor 1 receptor 2 (1019 aa).

A signal peptide spans 1–18; it reads MKSYCLLLSITLSCCCSA. Over 19–576 the chain is Extracellular; the sequence is EDLPDPPSIH…LREHNSAFMS (558 aa). 3 Ig-like C2-type domains span residues 37–109, 106–212, and 224–312; these read QAEA…IHLY, IHLY…LLVA, and QNKA…LIVL. A disulfide bridge links cysteine 52 with cysteine 92. Asparagine 96, asparagine 148, asparagine 169, asparagine 249, asparagine 342, asparagine 346, asparagine 355, asparagine 369, asparagine 379, asparagine 408, asparagine 422, asparagine 429, asparagine 433, and asparagine 514 each carry an N-linked (GlcNAc...) asparagine glycan. Intrachain disulfides connect cysteine 139–cysteine 193 and cysteine 239–cysteine 294. Ig-like C2-type domains lie at 383–474 and 487–567; these read STTV…LRIY and TLTC…VFHL. Residues cysteine 490 and cysteine 552 are joined by a disulfide bond. A helical transmembrane segment spans residues 577-597; sequence ALIGAGSTAAILFLLLLVVFY. Topologically, residues 598–1019 are cytoplasmic; it reads KWRQKPKYEI…LSVTNIYQLS (422 aa). The tract at residues 601-633 is regulatory juxtamembrane domain; sequence QKPKYEIRWKIIESTEGNHYTFVDPTLLPYNYK. Position 620 is a phosphotyrosine; by autocatalysis (tyrosine 620). In terms of domain architecture, Protein kinase spans 641 to 963; the sequence is LRLGAVLGSG…MICQLIDRLL (323 aa). ATP contacts are provided by residues 647–655 and lysine 674; that span reads LGSGAFGKV. 2 positions are modified to phosphotyrosine; by autocatalysis: tyrosine 756 and tyrosine 778. Catalysis depends on aspartate 827, which acts as the Proton acceptor. Residues 845-867 are activation loop; sequence DFGLARDIQNDDSYIVQGNARLP. Residues tyrosine 858 and tyrosine 974 each carry the phosphotyrosine; by autocatalysis modification. A disordered region spans residues 970-1001; sequence NHQSYSNINETKKDDFKGGKSQRRGEEEEQRR. Basic and acidic residues predominate over residues 979–1001; sequence ETKKDDFKGGKSQRRGEEEEQRR. Tyrosine 1016 carries the phosphotyrosine; by autocatalysis modification.

Belongs to the protein kinase superfamily. Tyr protein kinase family. CSF-1/PDGF receptor subfamily. In terms of assembly, monomer. Homodimer. Interacts with CSF1. In terms of processing, autophosphorylated in response to CSF1 binding. autophosphorylation, leading to its degradation. Ubiquitinated. Becomes rapidly polyubiquitinated after autophosphorylation, leading to its degradation.

It is found in the cell membrane. It catalyses the reaction L-tyrosyl-[protein] + ATP = O-phospho-L-tyrosyl-[protein] + ADP + H(+). Its activity is regulated as follows. Present in an inactive conformation in the absence of bound ligand. CSF1 binding leads to dimerization and activation by autophosphorylation on tyrosine residues. Tyrosine-protein kinase that acts as a cell-surface receptor for CSF1 and plays an essential role in the regulation of survival, proliferation and differentiation of hematopoietic precursor cells, especially mononuclear phagocytes, such as macrophages and monocytes. Plays an important role in innate immunity and in inflammatory processes. Plays an important role in the regulation of osteoclast proliferation and differentiation, the regulation of bone resorption, and is required for normal bone development. Promotes reorganization of the actin cytoskeleton, regulates formation of membrane ruffles, cell adhesion and cell migration. Activates several signaling pathways in response to ligand binding. In Takifugu rubripes (Japanese pufferfish), this protein is Macrophage colony-stimulating factor 1 receptor 2 (csf1r2).